Here is a 464-residue protein sequence, read N- to C-terminus: Glutamate--tRNA ligase 1 (464 aa).

Residues 8 to 18 (PSPTGHLHVGG) carry the 'HIGH' region motif. A 'KMSKS' region motif is present at residues 231–235 (PLSKR). K234 is an ATP binding site.

It belongs to the class-I aminoacyl-tRNA synthetase family. Glutamate--tRNA ligase type 1 subfamily. As to quaternary structure, monomer.

It localises to the cytoplasm. It catalyses the reaction tRNA(Glu) + L-glutamate + ATP = L-glutamyl-tRNA(Glu) + AMP + diphosphate. In terms of biological role, catalyzes the attachment of glutamate to tRNA(Glu) in a two-step reaction: glutamate is first activated by ATP to form Glu-AMP and then transferred to the acceptor end of tRNA(Glu). This is Glutamate--tRNA ligase 1 from Thermotoga petrophila (strain ATCC BAA-488 / DSM 13995 / JCM 10881 / RKU-1).